Consider the following 95-residue polypeptide: MKVDKETIEYVANLARLRLSEKEKEKLALDLESIISYVDKLNELDTSKIIPTDHVIPIKNVFRDDEVRDSYPKDKMLMNAPEKEDGCFKVPKVVE.

This sequence belongs to the GatC family. Heterotrimer of A, B and C subunits.

It catalyses the reaction L-glutamyl-tRNA(Gln) + L-glutamine + ATP + H2O = L-glutaminyl-tRNA(Gln) + L-glutamate + ADP + phosphate + H(+). The enzyme catalyses L-aspartyl-tRNA(Asn) + L-glutamine + ATP + H2O = L-asparaginyl-tRNA(Asn) + L-glutamate + ADP + phosphate + 2 H(+). In terms of biological role, allows the formation of correctly charged Asn-tRNA(Asn) or Gln-tRNA(Gln) through the transamidation of misacylated Asp-tRNA(Asn) or Glu-tRNA(Gln) in organisms which lack either or both of asparaginyl-tRNA or glutaminyl-tRNA synthetases. The reaction takes place in the presence of glutamine and ATP through an activated phospho-Asp-tRNA(Asn) or phospho-Glu-tRNA(Gln). The protein is Aspartyl/glutamyl-tRNA(Asn/Gln) amidotransferase subunit C of Acetivibrio thermocellus (strain ATCC 27405 / DSM 1237 / JCM 9322 / NBRC 103400 / NCIMB 10682 / NRRL B-4536 / VPI 7372) (Clostridium thermocellum).